Reading from the N-terminus, the 1086-residue chain is Endo-1,4-beta-xylanase C (1086 aa).

Positions 1–31 (MRGKWLRLCLAAVLIVSLLPGLGAGEWKASA) are cleaved as a signal peptide. CBM-cenC domains lie at 35 to 183 (GDIL…IRLV) and 197 to 359 (GQAL…ITAT). Residues 365–710 (EKNIPDLAKK…KPAYWALVDP (346 aa)) form the GH10 domain. Residue glutamate 502 is the Proton donor of the active site. Residue aspartate 556 is part of the active site. The active-site Nucleophile is the glutamate 620.

It belongs to the glycosyl hydrolase 10 (cellulase F) family.

The enzyme catalyses Endohydrolysis of (1-&gt;4)-beta-D-xylosidic linkages in xylans.. It participates in glycan degradation; xylan degradation. Its function is as follows. Endoxylanase with high hydrolytic activity on birchwood and oat spelt xylan. Xylotetraose, xylotriose, xylobiose and xylose are the main products from birchwood xylan hydrolysis. Shows increasing activity on xylo-oligosaccharides of increasing length. Displays very low hydrolytic activity on Avicel, carboxymethylcellulose (CMC) and p-nitrophenyl-beta-xylopyranoside. Also shows transxylosidase activity, allowing the formation of xylo-oligosaccharides of higher degree of polymerization than the starting substrate. This chain is Endo-1,4-beta-xylanase C (xynC), found in Paenibacillus barcinonensis.